Consider the following 212-residue polypeptide: HTH-type transcriptional repressor KstR (212 aa).

The span at 1–11 (MTTSSRSRSST) shows a compositional bias: low complexity. The tract at residues 1 to 28 (MTTSSRSRSSTVAAATLGEDDLSSNAQK) is disordered. Positions 28 to 88 (KERRKRILDA…SALAREFERI (61 aa)) constitute an HTH tetR-type domain. The segment at residues 51–70 (QMRAVAERADVAVGTLYRYF) is a DNA-binding region (H-T-H motif).

Homodimer.

Functionally, controls the expression of genes used for utilizing diverse lipids as energy sources. The polypeptide is HTH-type transcriptional repressor KstR (kstR) (Rhodococcus jostii (strain RHA1)).